Here is a 410-residue protein sequence, read N- to C-terminus: MVLSQRQRDELNRAIADYLRSNGYEEAYSVFKKEAELDMNEELDKKYAGLLEKKWTSVIRLQKKVMELESKLNEAKEEFTSGGPLGQKRDPKEWIPRPPEKYALSGHRSPVTRVIFHPVFSVMVSASEDATIKVWDYETGDFERTLKGHTDSVQDISFDHSGKLLASCSADMTIKLWDFQGFECIRTMHGHDHNVSSVAIMPNGDHIVSASRDKTIKMWEVQTGYCVKTFTGHREWVRMVRPNQDGTLIASCSNDQTVRVWVVATKECKAELREHEHVVECISWAPESSYSSISEATGSETKKSGKPGPFLLSGSRDKTIKMWDVSTGMCLMTLVGHDNWVRGVLFHSGGKFILSCADDKTLRVWDYKNKRCMKTLNAHEHFVTSLDFHKTAPYVVTGSVDQTVKVWECR.

Residues 1–38 (MVLSQRQRDELNRAIADYLRSNGYEEAYSVFKKEAELD) are required for self-association and interaction with PAFAH1B2 and PAFAH1B3. The interval 1–66 (MVLSQRQRDE…SVIRLQKKVM (66 aa)) is interaction with NDE1. An interaction with NDEL1 region spans residues 1 to 102 (MVLSQRQRDE…EWIPRPPEKY (102 aa)). A LisH domain is found at 7–39 (QRDELNRAIADYLRSNGYEEAYSVFKKEAELDM). N6-acetyllysine is present on Lys53. Residues 56 to 82 (TSVIRLQKKVMELESKLNEAKEEFTSG) adopt a coiled-coil conformation. The interval 83–410 (GPLGQKRDPK…DQTVKVWECR (328 aa)) is interaction with dynein and dynactin. WD repeat units follow at residues 106–147 (GHRS…RTLK), 148–187 (GHTDSVQDISFDHSGKLLASCSADMTIKLWDFQGFECIRT), 190–229 (GHDHNVSSVAIMPNGDHIVSASRDKTIKMWEVQTGYCVKT), 232–271 (GHREWVRMVRPNQDGTLIASCSNDQTVRVWVVATKECKAE), 274–333 (EHEH…CLMT), 336–377 (GHDN…KTLN), and 378–410 (AHEHFVTSLDFHKTAPYVVTGSVDQTVKVWECR). A Phosphoserine modification is found at Ser109. Positions 367–409 (YKNKRCMKTLNAHEHFVTSLDFHKTAPYVVTGSVDQTVKVWEC) are interaction with DCX. The interval 388–410 (FHKTAPYVVTGSVDQTVKVWECR) is interaction with NDEL1.

This sequence belongs to the WD repeat LIS1/nudF family. As to quaternary structure, can self-associate. Component of the cytosolic PAF-AH (I) heterotetrameric enzyme, which is composed of PAFAH1B1 (beta), PAFAH1B2 (alpha2) and PAFAH1B3 (alpha1) subunits. The catalytic activity of the enzyme resides in the alpha1 (PAFAH1B3) and alpha2 (PAFAH1B2) subunits, whereas the beta subunit (PAFAH1B1) has regulatory activity. Trimer formation is not essential for the catalytic activity. Interacts with the catalytic dimer of PAF-AH (I) heterotetrameric enzyme: interacts with PAFAH1B2 homodimer (alpha2/alpha2 homodimer), PAFAH1B3 homodimer (alpha1/alpha1 homodimer) and PAFAH1B2-PAFAH1B3 heterodimer (alpha2/alpha1 heterodimer). Interacts with DCX, dynein, dynactin, IQGAP1, KATNB1, NDE1, NDEL1, NUDC and RSN. Interacts with DISC1, and this interaction is enhanced by NDEL1. Interacts with DAB1 when DAB1 is phosphorylated in response to RELN/reelin signaling. Interacts with INTS13. Interacts with DCDC1.

The protein resides in the cytoplasm. It localises to the cytoskeleton. The protein localises to the microtubule organizing center. Its subcellular location is the centrosome. It is found in the spindle. The protein resides in the nucleus membrane. Its function is as follows. Regulatory subunit (beta subunit) of the cytosolic type I platelet-activating factor (PAF) acetylhydrolase (PAF-AH (I)), an enzyme that catalyzes the hydrolyze of the acetyl group at the sn-2 position of PAF and its analogs and participates in PAF inactivation. Regulates the PAF-AH (I) activity in a catalytic dimer composition-dependent manner. Positively regulates the activity of the minus-end directed microtubule motor protein dynein. May enhance dynein-mediated microtubule sliding by targeting dynein to the microtubule plus end. Required for several dynein- and microtubule-dependent processes such as the maintenance of Golgi integrity, the peripheral transport of microtubule fragments and the coupling of the nucleus and centrosome. Required during brain development for the proliferation of neuronal precursors and the migration of newly formed neurons from the ventricular/subventricular zone toward the cortical plate. Neuronal migration involves a process called nucleokinesis, whereby migrating cells extend an anterior process into which the nucleus subsequently translocates. During nucleokinesis dynein at the nuclear surface may translocate the nucleus towards the centrosome by exerting force on centrosomal microtubules. Also required for proper activation of Rho GTPases and actin polymerization at the leading edge of locomoting cerebellar neurons and postmigratory hippocampal neurons in response to calcium influx triggered via NMDA receptors. May also play a role in other forms of cell locomotion including the migration of fibroblasts during wound healing. Required for dynein recruitment to microtubule plus ends and BICD2-bound cargos. May modulate the Reelin pathway through interaction of the PAF-AH (I) catalytic dimer with VLDLR. The polypeptide is Platelet-activating factor acetylhydrolase IB subunit beta (Felis catus (Cat)).